The primary structure comprises 242 residues: Arginine transport ATP-binding protein ArtP (242 aa).

The ABC transporter domain maps to 3-241; the sequence is IQLNGINCFY…QTEAFKNYLS (239 aa). Residue 35–42 coordinates ATP; it reads GPSGAGKS.

The protein belongs to the ABC transporter superfamily. As to quaternary structure, the complex is composed of two ATP-binding proteins (ArtP), two transmembrane proteins (ArtM and ArtQ) and two solute-binding proteins (ArtJ and ArtI).

It localises to the cell inner membrane. It catalyses the reaction a polar amino acid(out) + ATP + H2O = a polar amino acid(in) + ADP + phosphate + H(+). The enzyme catalyses L-arginine(out) + ATP + H2O = L-arginine(in) + ADP + phosphate + H(+). Functionally, part of the ABC transporter complex ArtPIQMJ involved in arginine transport. Probably responsible for energy coupling to the transport system. This Escherichia coli O157:H7 protein is Arginine transport ATP-binding protein ArtP (artP).